The chain runs to 569 residues: Small ribosomal subunit protein bS1 (569 aa).

6 consecutive S1 motif domains span residues 52–116, 134–199, 220–288, 305–375, 392–462, and 479–548; these read GAIL…LSRE, GSIV…VSRR, GERR…LGLK, GKRV…LGLK, GLRV…LGVK, and GSDI…LSIK.

It belongs to the bacterial ribosomal protein bS1 family.

Functionally, binds mRNA; thus facilitating recognition of the initiation point. It is needed to translate mRNA with a short Shine-Dalgarno (SD) purine-rich sequence. This Chlamydia trachomatis serovar D (strain ATCC VR-885 / DSM 19411 / UW-3/Cx) protein is Small ribosomal subunit protein bS1 (rpsA).